Here is a 287-residue protein sequence, read N- to C-terminus: ATP synthase gamma chain (287 aa).

This sequence belongs to the ATPase gamma chain family. As to quaternary structure, F-type ATPases have 2 components, CF(1) - the catalytic core - and CF(0) - the membrane proton channel. CF(1) has five subunits: alpha(3), beta(3), gamma(1), delta(1), epsilon(1). CF(0) has three main subunits: a, b and c.

Its subcellular location is the cell membrane. In terms of biological role, produces ATP from ADP in the presence of a proton gradient across the membrane. The gamma chain is believed to be important in regulating ATPase activity and the flow of protons through the CF(0) complex. This Halothermothrix orenii (strain H 168 / OCM 544 / DSM 9562) protein is ATP synthase gamma chain.